Consider the following 1137-residue polypeptide: MDLYHTPAGALDKLVAHSLHPAPEFTAAVRRALGSLDNVLRKNGAGGLQRPRVIRIIKGGAHARGTALRGGTDVELVIFLDCLRSFGDQKTCHTEILGAIQALLESWGCNPGPGLTFEFSGPKASGILQFRLASVDQENWIDVSLVPAFDALGQLHSEVKPTPNVYSSLLSSHCQAGEHSACFTELRKNFVNIRPVKLKNLILLVKHWYRQVQTQVVRATLPPSYALELLTIFAWEQGCRKDAFSLAQGLRTVLALIQRNKHLCIFWTENYGFEDPAVGEFLRRQLKRPRPVILDPADPTWDLGNGTAWCWDVLAKEAEYSFNQQCFKEASGALVQPWEGPGLPCAGILDLGHPIQQGAKHALEDNNGHLAVQPMKESLQPSNPARGLPETATKISAMPDPTVTETHKSLKKSVHPKTVSETVVNPSSHVWITQSTASSNTPPGHSSMSTAGSQMGPDLSQIPSKELDSFIQDHLRPSSQFQQQVRQAIDTILCCLREKCVDKVLRVSKGGSFGRGTDLRGKCDVELVIFYKTLGDFKGQNSHQTEILCDMQAQLQRWCQNPAPGLSLQFIEQKSNALHLQLVPTNLSNRVDLSVLPAFDAVGPLKSGAKPLPETYSSLLSSGCQAGEHAACFAELRRNFINTRPAKLRSLMLLVKHWYRQVAARFEGGETAGAALPPAYALELLTVFAWEQGCGEQKFSMAEGLRTVLRLVQQHQSLCIYWTVNYSVQDPAIRAHLLRQLRKARPLILDPADPTWNMDQGNWKLLAQEAAALESQVCLQSRDGNLVPPWDVMPALLHQTPAQNLDKFICEFLQPDRHFLTQVKRAVDTICSFLKENCFRNSTIKVLKVVKGGSSAKGTALQGRSDADLVVFLSCFRQFSEQGSHRAEIIAEIQAQLEACQQKQRFDVKFEISKRKNPRVLSFTLTSKTLLGQSVDFDVLPAFDALGQLKSGSRPDPRVYTDLIQSYSNAGEFSTCFTELQRDFISSRPTKLKSLIRLVKHWYQQCNKTVKGKGSLPPQHGLELLTVYAWERGSQNPQFNMAEGFRTVLELIGQYRQLCVYWTINYGAEDETIGDFLKMQLQKPRPVILDPADPTGNLGHNARWDLLAKEAAAYTSALCCMDKDGNPIKPWPVKAAV.

The residue at position 1 (methionine 1) is an N-acetylmethionine. Residues 6-341 (TPAGALDKLV…GALVQPWEGP (336 aa)) are OAS domain 1. Interaction with dsRNA regions lie at residues 12–56 (DKLV…VIRI) and 185–199 (ELRKNFVNIRPVKLK). The tract at residues 342 to 461 (GLPCAGILDL…GSQMGPDLSQ (120 aa)) is linker. Residues 434–453 (QSTASSNTPPGHSSMSTAGS) are compositionally biased toward polar residues. The interval 434 to 462 (QSTASSNTPPGHSSMSTAGSQMGPDLSQI) is disordered. 2 OAS domain regions span residues 462-792 (IPSK…PWDV) and 800-1134 (TPAQ…WPVK). ATP is bound at residue serine 854. Residues aspartate 866, aspartate 868, and aspartate 938 each contribute to the Mg(2+) site. The ATP site is built by arginine 997, lysine 1000, and glutamine 1019.

The protein belongs to the 2-5A synthase family. Monomer. Mg(2+) is required as a cofactor.

The protein localises to the cytoplasm. It is found in the nucleus. It catalyses the reaction 3 ATP = 5'-triphosphoadenylyl-(2'-&gt;5')-adenylyl-(2'-&gt;5')-adenosine + 2 diphosphate. Its activity is regulated as follows. Produced as a latent enzyme which is activated by dsRNA generated during the course of viral infection. Strongly activated by long dsRNAs at least 50 nucleotides in length. ssRNA does not activate the enzyme. In terms of biological role, interferon-induced, dsRNA-activated antiviral enzyme which plays a critical role in cellular innate antiviral response. In addition, it may also play a role in other cellular processes such as apoptosis, cell growth, differentiation and gene regulation. Synthesizes preferentially dimers of 2'-5'-oligoadenylates (2-5A) from ATP which then bind to the inactive monomeric form of ribonuclease L (RNase L) leading to its dimerization and subsequent activation. Activation of RNase L leads to degradation of cellular as well as viral RNA, resulting in the inhibition of protein synthesis, thus terminating viral replication. Can mediate the antiviral effect via the classical RNase L-dependent pathway or an alternative antiviral pathway independent of RNase L. This Rattus norvegicus (Rat) protein is 2'-5'-oligoadenylate synthase 3 (Oas3).